Here is an 884-residue protein sequence, read N- to C-terminus: Alanine--tRNA ligase (884 aa).

Residues histidine 565, histidine 569, cysteine 674, and histidine 678 each coordinate Zn(2+).

It belongs to the class-II aminoacyl-tRNA synthetase family. Zn(2+) is required as a cofactor.

Its subcellular location is the cytoplasm. The enzyme catalyses tRNA(Ala) + L-alanine + ATP = L-alanyl-tRNA(Ala) + AMP + diphosphate. In terms of biological role, catalyzes the attachment of alanine to tRNA(Ala) in a two-step reaction: alanine is first activated by ATP to form Ala-AMP and then transferred to the acceptor end of tRNA(Ala). Also edits incorrectly charged Ser-tRNA(Ala) and Gly-tRNA(Ala) via its editing domain. In Xanthobacter autotrophicus (strain ATCC BAA-1158 / Py2), this protein is Alanine--tRNA ligase.